Consider the following 1273-residue polypeptide: DNA-directed RNA polymerase subunit beta (1273 aa).

Residues 1252–1273 form a disordered region; the sequence is ADDQDLVVSSNDEEVSENDERS.

The protein belongs to the RNA polymerase beta chain family. As to quaternary structure, the RNAP catalytic core consists of 2 alpha, 1 beta, 1 beta' and 1 omega subunit. When a sigma factor is associated with the core the holoenzyme is formed, which can initiate transcription.

It carries out the reaction RNA(n) + a ribonucleoside 5'-triphosphate = RNA(n+1) + diphosphate. Functionally, DNA-dependent RNA polymerase catalyzes the transcription of DNA into RNA using the four ribonucleoside triphosphates as substrates. The chain is DNA-directed RNA polymerase subunit beta from Dehalococcoides mccartyi (strain ATCC BAA-2100 / JCM 16839 / KCTC 5957 / BAV1).